A 235-amino-acid polypeptide reads, in one-letter code: Claudin-16 (235 aa).

Residues 1–3 (MKD) are Cytoplasmic-facing. Residues 4-24 (LLQYAACFLAIFSTGFLIVAT) form a helical membrane-spanning segment. Residues 25–79 (WTDCWMVNADDSLEVSTKCRGLWWECVTNAFDGIRTCDEYDSIYAEHPLKLVVTR) are Extracellular-facing. A helical transmembrane segment spans residues 80-100 (ALMITADILAGFGFITLLLGL). The Cytoplasmic portion of the chain corresponds to 101-115 (DCVKFLPDDPQIKVR). The helical transmembrane segment at 116–136 (LCFVAGTTLLIAGTPGIIGSV) threads the bilayer. Residues 137–169 (WYAVDVYVERSSLVLHNIFLGIQYKFGWSCWLG) are Extracellular-facing. A helical membrane pass occupies residues 170–190 (MAGSLGCFLAGALLTCCLYLF). At 191–235 (KDVGPERNYPYAMRKPYSTAGVSMAKSYKAPRTETAKMYAVDTRV) the chain is on the cytoplasmic side. The Interaction with TJP1 signature appears at 233–235 (TRV).

Belongs to the claudin family. As to quaternary structure, can form heteropolymeric tight junction strands with other claudins. Interacts with CLDN19. Cannot form tight junction strands on its own. Interacts (via PDZ-binding motif TRV) with TJP1 (via PDZ domain). Expressed in the corticomedullary axis of the TAL, specifically in the cortex and the outer stripe of outer medulla (OSOM) zone (at protein level).

It is found in the cell junction. The protein resides in the tight junction. It localises to the cell membrane. The enzyme catalyses Mg(2+)(in) = Mg(2+)(out). It carries out the reaction Ca(2+)(in) = Ca(2+)(out). It catalyses the reaction Na(+)(in) = Na(+)(out). The catalysed reaction is K(+)(in) = K(+)(out). The enzyme catalyses Rb(+)(in) = Rb(+)(out). It carries out the reaction Cs(+)(in) = Cs(+)(out). It catalyses the reaction Li(+)(in) = Li(+)(out). Its function is as follows. Forms paracellular channels: coassembles with CLDN19 into tight junction strands with cation-selective channels through the strands, conveying epithelial permeability in a process known as paracellular tight junction permeability. Involved in the maintenance of ion gradients along the nephron. In the thick ascending limb (TAL) of Henle's loop, facilitates sodium paracellular permeability from the interstitial compartment to the lumen, contributing to the lumen-positive transepithelial potential that drives paracellular magnesium and calcium reabsorption. In Mus musculus (Mouse), this protein is Claudin-16.